Reading from the N-terminus, the 289-residue chain is ATP synthase gamma chain (289 aa).

Belongs to the ATPase gamma chain family. As to quaternary structure, F-type ATPases have 2 components, CF(1) - the catalytic core - and CF(0) - the membrane proton channel. CF(1) has five subunits: alpha(3), beta(3), gamma(1), delta(1), epsilon(1). CF(0) has three main subunits: a, b and c.

It is found in the cell inner membrane. Functionally, produces ATP from ADP in the presence of a proton gradient across the membrane. The gamma chain is believed to be important in regulating ATPase activity and the flow of protons through the CF(0) complex. The polypeptide is ATP synthase gamma chain (Histophilus somni (strain 2336) (Haemophilus somnus)).